The primary structure comprises 513 residues: Interferon-induced, double-stranded RNA-activated protein kinase (513 aa).

An N-acetylalanine modification is found at Ala2. The DRBM 1 domain maps to 8–76; sequence FYVDKLNKYS…AKLAVEILDN (69 aa). Lys68 is covalently cross-linked (Glycyl lysine isopeptide (Lys-Gly) (interchain with G-Cter in ISG15)). Ser82 carries the post-translational modification Phosphoserine. Thr84 is subject to Phosphothreonine. A DRBM 2 domain is found at 95–162; it reads NYIGLVNSFA…AKNAYQKLSE (68 aa). Tyr96 is modified (phosphotyrosine; by autocatalysis). Lys154 is covalently cross-linked (Glycyl lysine isopeptide (Lys-Gly) (interchain with G-Cter in ISG15)). The residue at position 157 (Tyr157) is a Phosphotyrosine; by autocatalysis. Thr227 is modified (phosphothreonine). Residues 235–513 form an interaction with TRAF5 region; that stretch reads DFEDIEEIGS…ISEKKKRNTC (279 aa). Positions 236-502 constitute a Protein kinase domain; sequence FEDIEEIGSG…EILKTLAEWK (267 aa). 242–250 lines the ATP pocket; that stretch reads IGSGGFGQV. The residue at position 262 (Tyr262) is a Phosphotyrosine; by autocatalysis. Lys265 is a binding site for ATP. The active-site Proton acceptor is Asp373. 2 positions are modified to phosphothreonine; by autocatalysis: Thr406 and Thr411. Ser416 is subject to Phosphoserine.

Belongs to the protein kinase superfamily. Ser/Thr protein kinase family. GCN2 subfamily. As to quaternary structure, homodimer. Interacts with DNAJC3. Interacts with STRBP. Forms a complex with FANCA, FANCC, FANCG and HSP70. Interacts with ADAR/ADAR1. The inactive form interacts with NCK1 and GSN. Interacts (via the kinase catalytic domain) with STAT3 (via SH2 domain), TRAF2 (C-terminus), TRAF5 (C-terminus) and TRAF6 (C-terminus). Interacts with MAP2K6, IKBKB/IKKB, IRS1, NPM1, TARBP2, NLRP1, NLRP3, NLRC4 and AIM2. Interacts (via DRBM 1 domain) with DUS2L (via DRBM domain). Interacts with DHX9 (via N-terminus) and this interaction is dependent upon activation of the kinase. Autophosphorylated on several Ser, Thr and Tyr residues. Autophosphorylation of Thr-411 is dependent on Thr-406 and is stimulated by dsRNA binding and dimerization. Autophosphorylation apparently leads to the activation of the kinase. Tyrosine autophosphorylation is essential for efficient dsRNA-binding, dimerization, and kinase activation.

The protein localises to the cytoplasm. Its subcellular location is the nucleus. It localises to the perinuclear region. The enzyme catalyses L-seryl-[protein] + ATP = O-phospho-L-seryl-[protein] + ADP + H(+). The catalysed reaction is L-threonyl-[protein] + ATP = O-phospho-L-threonyl-[protein] + ADP + H(+). It catalyses the reaction L-tyrosyl-[protein] + ATP = O-phospho-L-tyrosyl-[protein] + ADP + H(+). With respect to regulation, initially produced in an inactive form and is activated by binding to viral dsRNA, which causes dimerization and autophosphorylation in the activation loop and stimulation of function. ISGylation can activate it in the absence of viral infection. Can also be activated by heparin, pro-inflammatory stimuli, growth factors, cytokines, oxidative stress and the cellular protein PRKRA. Activity is markedly stimulated by manganese ions. Activation is blocked by the cellular proteins TARBP2, DUS2L, NPM1, NCK1 and ADAR. IFN-induced dsRNA-dependent serine/threonine-protein kinase that phosphorylates the alpha subunit of eukaryotic translation initiation factor 2 (EIF2S1/eIF-2-alpha) and plays a key role in the innate immune response to viral infection. Inhibits viral replication via the integrated stress response (ISR): EIF2S1/eIF-2-alpha phosphorylation in response to viral infection converts EIF2S1/eIF-2-alpha in a global protein synthesis inhibitor, resulting to a shutdown of cellular and viral protein synthesis, while concomitantly initiating the preferential translation of ISR-specific mRNAs, such as the transcriptional activator ATF4. Exerts its antiviral activity on a wide range of DNA and RNA viruses. Also involved in the regulation of signal transduction, apoptosis, cell proliferation and differentiation: phosphorylates other substrates including p53/TP53, PPP2R5A, DHX9, ILF3 and IRS1. In addition to serine/threonine-protein kinase activity, also has tyrosine-protein kinase activity and phosphorylates CDK1 at 'Tyr-4' upon DNA damage, facilitating its ubiquitination and proteasomal degradation. Either as an adapter protein and/or via its kinase activity, can regulate various signaling pathways (p38 MAP kinase, NF-kappa-B and insulin signaling pathways) and transcription factors (JUN, STAT1, STAT3, IRF1, ATF3) involved in the expression of genes encoding pro-inflammatory cytokines and IFNs. Activates the NF-kappa-B pathway via interaction with IKBKB and TRAF family of proteins and activates the p38 MAP kinase pathway via interaction with MAP2K6. Can act as both a positive and negative regulator of the insulin signaling pathway (ISP). Negatively regulates ISP by inducing the inhibitory phosphorylation of insulin receptor substrate 1 (IRS1) at 'Ser-312' and positively regulates ISP via phosphorylation of PPP2R5A which activates FOXO1, which in turn up-regulates the expression of insulin receptor substrate 2 (IRS2). Can regulate NLRP3 inflammasome assembly and the activation of NLRP3, NLRP1, AIM2 and NLRC4 inflammasomes. Plays a role in the regulation of the cytoskeleton by binding to gelsolin (GSN), sequestering the protein in an inactive conformation away from actin. In Rattus norvegicus (Rat), this protein is Interferon-induced, double-stranded RNA-activated protein kinase (Eif2ak2).